We begin with the raw amino-acid sequence, 276 residues long: NH(3)-dependent NAD(+) synthetase (276 aa).

43–50 is a binding site for ATP; that stretch reads GISGGVDS. Residue D49 coordinates Mg(2+). Position 146 (R146) interacts with deamido-NAD(+). Residue T166 participates in ATP binding. Residue E171 participates in Mg(2+) binding. Residues K179 and D186 each coordinate deamido-NAD(+). K195 and T217 together coordinate ATP. 266-267 is a deamido-NAD(+) binding site; sequence HK.

The protein belongs to the NAD synthetase family. Homodimer.

The enzyme catalyses deamido-NAD(+) + NH4(+) + ATP = AMP + diphosphate + NAD(+) + H(+). It participates in cofactor biosynthesis; NAD(+) biosynthesis; NAD(+) from deamido-NAD(+) (ammonia route): step 1/1. Functionally, catalyzes the ATP-dependent amidation of deamido-NAD to form NAD. Uses ammonia as a nitrogen source. The protein is NH(3)-dependent NAD(+) synthetase of Psychromonas ingrahamii (strain DSM 17664 / CCUG 51855 / 37).